Here is a 425-residue protein sequence, read N- to C-terminus: Serine--tRNA ligase (425 aa).

Residue 230-232 (TAE) coordinates L-serine. Residue 261-263 (RSE) participates in ATP binding. E284 is an L-serine binding site. 348-351 (EISS) contributes to the ATP binding site. S384 serves as a coordination point for L-serine.

It belongs to the class-II aminoacyl-tRNA synthetase family. Type-1 seryl-tRNA synthetase subfamily. Homodimer. The tRNA molecule binds across the dimer.

It localises to the cytoplasm. The catalysed reaction is tRNA(Ser) + L-serine + ATP = L-seryl-tRNA(Ser) + AMP + diphosphate + H(+). It carries out the reaction tRNA(Sec) + L-serine + ATP = L-seryl-tRNA(Sec) + AMP + diphosphate + H(+). It participates in aminoacyl-tRNA biosynthesis; selenocysteinyl-tRNA(Sec) biosynthesis; L-seryl-tRNA(Sec) from L-serine and tRNA(Sec): step 1/1. Its function is as follows. Catalyzes the attachment of serine to tRNA(Ser). Is also able to aminoacylate tRNA(Sec) with serine, to form the misacylated tRNA L-seryl-tRNA(Sec), which will be further converted into selenocysteinyl-tRNA(Sec). The chain is Serine--tRNA ligase from Streptococcus pyogenes serotype M49 (strain NZ131).